Consider the following 294-residue polypeptide: MAWIQINTTVSEALAEPLSDAFMEVNAASVTFADAKDQPIFEPEIGTTPIWSQTKVIGLFDAEADIPAVINQLATLIPDVPAERYNIEALEDKDWIRAWMDQFQPMQFGSRLWIVPSWCDTPDPKAVNLMLDPGMAFGTGTHPTTALCLTWLDQNPPTDLTVIDYGCGSGVLALAAEKLGAKHVKGTDIDPQAIIASQQNADRNNANIEFKLVKEFQSEPVDLLIANILAGPLKALAPEFIRLMKPNATLILSGLLTNQAADLIAFYQQQGFEFLAQNDLDEWSQLSFTKQVTS.

Residues Thr-145, Gly-166, Asp-188, and Asn-227 each coordinate S-adenosyl-L-methionine.

It belongs to the methyltransferase superfamily. PrmA family.

The protein localises to the cytoplasm. It carries out the reaction L-lysyl-[protein] + 3 S-adenosyl-L-methionine = N(6),N(6),N(6)-trimethyl-L-lysyl-[protein] + 3 S-adenosyl-L-homocysteine + 3 H(+). Its function is as follows. Methylates ribosomal protein L11. The protein is Ribosomal protein L11 methyltransferase of Hydrogenovibrio crunogenus (strain DSM 25203 / XCL-2) (Thiomicrospira crunogena).